Here is a 954-residue protein sequence, read N- to C-terminus: Glycine dehydrogenase (decarboxylating) (954 aa).

Position 704 is an N6-(pyridoxal phosphate)lysine (lysine 704).

It belongs to the GcvP family. As to quaternary structure, the glycine cleavage system is composed of four proteins: P, T, L and H. Pyridoxal 5'-phosphate serves as cofactor.

The enzyme catalyses N(6)-[(R)-lipoyl]-L-lysyl-[glycine-cleavage complex H protein] + glycine + H(+) = N(6)-[(R)-S(8)-aminomethyldihydrolipoyl]-L-lysyl-[glycine-cleavage complex H protein] + CO2. The glycine cleavage system catalyzes the degradation of glycine. The P protein binds the alpha-amino group of glycine through its pyridoxal phosphate cofactor; CO(2) is released and the remaining methylamine moiety is then transferred to the lipoamide cofactor of the H protein. The protein is Glycine dehydrogenase (decarboxylating) of Allorhizobium ampelinum (strain ATCC BAA-846 / DSM 112012 / S4) (Agrobacterium vitis (strain S4)).